Reading from the N-terminus, the 853-residue chain is Guanine nucleotide exchange protein smcr8a (853 aa).

A uDENN FLCN/SMCR8-type domain is found at 47–219 (TSYAKFSKDF…KETELQKMNN (173 aa)). Disordered stretches follow at residues 272–298 (PVMD…SRKS) and 418–454 (LKPG…SFSS). Over residues 280-298 (DTNPSDSAENTVETESRKS) the composition is skewed to polar residues. Positions 316–753 (RLKTLEELCD…LISHLADHRT (438 aa)) constitute a cDENN FLCN/SMCR8-type domain. The span at 421–432 (GVESGEGPPESS) shows a compositional bias: low complexity. The segment covering 433-454 (TSDITQETSEAADTETKGSFSS) has biased composition (polar residues). In terms of domain architecture, dDENN FLCN/SMCR8-type spans 762-826 (FLHIQGMLTQ…IIQYLSELIK (65 aa)).

It belongs to the SMCR8 family. Component of the C9orf72-SMCR8 complex. The C9orf72-SMCR8 complex associates with the ATG1/ULK1 kinase complex.

It localises to the cytoplasm. The protein localises to the nucleus. Functionally, component of the C9orf72-SMCR8 complex, a complex that has guanine nucleotide exchange factor (GEF) activity and regulates autophagy. In the complex, C9orf72 and SMCR8 probably constitute the catalytic subunits that promote the exchange of GDP to GTP, converting inactive GDP-bound RAB8A and RAB39B into their active GTP-bound form, thereby promoting autophagosome maturation. The C9orf72-SMCR8 complex also acts as a negative regulator of autophagy initiation by interacting with the ATG1/ULK1 kinase complex and inhibiting its protein kinase activity. This is Guanine nucleotide exchange protein smcr8a (smcr8a) from Danio rerio (Zebrafish).